Here is a 383-residue protein sequence, read N- to C-terminus: MQNPPLIRPDMYNQGSSSMATYNASEKNLNEHPSPQIAQPSTSQKLPYRINPTTTNGDTDISVNSNPIQPPLPNLMHLSGPSDYRSMHQSPIHPSYIIPPHSNERKQSASYNRPQNAHVSIQPSVVFPPKSYSISYAPYQINPPLPNGLPNQSISLNKEYIAEEQLSTLPSRNTSVTTAPPSFQNSADTAKNSADNNDNNDNVTKPVPDKDTQLISSSGKTLRNTRRAAQNRTAQKAFRQRKEKYIKNLEQKSKIFDDLLAENNNFKSLNDSLRNDNNILIAQHEAIRNAITMLRSEYDVLCNENNMLKNENSIIKNEHNMSRNENENLKLENKRFHAEYIRMIEDIENTKRKEQEQRDEIEQLKKKIRSLEEIVGRHSDSAT.

Disordered regions lie at residues 1–64, 83–113, and 168–239; these read MQNP…ISVN, DYRS…SYNR, and TLPS…KAFR. The segment covering 13-64 has biased composition (polar residues); that stretch reads NQGSSSMATYNASEKNLNEHPSPQIAQPSTSQKLPYRINPTTTNGDTDISVN. The segment covering 88–101 has biased composition (low complexity); the sequence is HQSPIHPSYIIPPH. The segment covering 168-184 has biased composition (polar residues); that stretch reads TLPSRNTSVTTAPPSFQ. The segment covering 185-206 has biased composition (low complexity); it reads NSADTAKNSADNNDNNDNVTKP. Over residues 213 to 222 the composition is skewed to polar residues; the sequence is QLISSSGKTL. Residues 221-284 form the bZIP domain; sequence TLRNTRRAAQ…NDNNILIAQH (64 aa). The interval 223–247 is basic motif; sequence RNTRRAAQNRTAQKAFRQRKEKYIK. A compositionally biased stretch (low complexity) spans 227 to 237; it reads RAAQNRTAQKA. A leucine-zipper region spans residues 249–277; the sequence is LEQKSKIFDDLLAENNNFKSLNDSLRNDN.

It belongs to the bZIP family. YAP subfamily. As to quaternary structure, homodimer.

It is found in the nucleus. Its function is as follows. Transcription activator involved in the regulation of genes expressed in response to environmental changes and metabolic requirements. According to genome-wide promoter binding and gene expression studies it regulates, among others, genes involved in ribosome biogenesis, protein synthesis, carbohydrate metabolism, and carbohydrate transport. It may also be involved in pleiotropic drug resistance. When overexpressed, it confers resistance to cisplatin, methylmethanosulfonate, and mitomycin C, and increases cellular tolerance to sodium and lithium. This Saccharomyces cerevisiae (strain ATCC 204508 / S288c) (Baker's yeast) protein is AP-1-like transcription factor YAP6 (YAP6).